The following is a 244-amino-acid chain: Gasdermin-like protein rcd-1-2 (244 aa).

The interval 1–22 is disordered; sequence MDNEEWFPLKQTHYPPPTIPSM.

The protein belongs to the gasdermin family. In terms of assembly, heterooligomer; the heterooligomer with rcd-1-1 forms a ring-shaped pore complex when inserted in the membrane.

Its subcellular location is the cytoplasm. The protein localises to the cell membrane. Its function is as follows. Gasdermin-like protein involved in heterokaryon incompatibility, a process that ensures that during spontaneous vegetative cell fusion, only compatible cells from the same colony survive (non-self-recognition). In N.crassa, the rcd-1 locus exists as 2 incompatible alleles, rcd-1-1 (AC Q7SBA0) and rcd-1-2 (this entry). During the allorecognition process, forms a heterooligomer with rcd-1-1, thereby forming a functional gasdermin-like complex that binds to membranes and forms pores, triggering cell death. Binds negatively charged phospholipids, such as cardiolipin and phosphatidylserine. Also binds to phosphoinositides, preferentially to phosphatidylinositol-3-phosphate (PtdIns-3-P), PtdIns-5-P and PtdIns-3,5-P2. The chain is Gasdermin-like protein rcd-1-2 from Neurospora crassa.